A 39-amino-acid chain; its full sequence is Photosystem II reaction center protein J (39 aa).

Residues 7–27 (IPLWLVATVAGMGVITLLGIF) form a helical membrane-spanning segment.

This sequence belongs to the PsbJ family. In terms of assembly, PSII is composed of 1 copy each of membrane proteins PsbA, PsbB, PsbC, PsbD, PsbE, PsbF, PsbH, PsbI, PsbJ, PsbK, PsbL, PsbM, PsbT, PsbX, PsbY, PsbZ, Psb30/Ycf12, peripheral proteins PsbO, CyanoQ (PsbQ), PsbU, PsbV and a large number of cofactors. It forms dimeric complexes.

It localises to the cellular thylakoid membrane. Its function is as follows. One of the components of the core complex of photosystem II (PSII). PSII is a light-driven water:plastoquinone oxidoreductase that uses light energy to abstract electrons from H(2)O, generating O(2) and a proton gradient subsequently used for ATP formation. It consists of a core antenna complex that captures photons, and an electron transfer chain that converts photonic excitation into a charge separation. The sequence is that of Photosystem II reaction center protein J from Cyanothece sp. (strain PCC 7425 / ATCC 29141).